We begin with the raw amino-acid sequence, 53 residues long: Metallothionein (53 aa).

The protein belongs to the metallothionein superfamily. Type 14 family.

This protein complexes cadmium, zinc and copper. In Synechococcus sp, this protein is Metallothionein.